A 535-amino-acid chain; its full sequence is CTP synthase (535 aa).

The interval 1–267 (MTKYIFVTGG…DQIVCDHLKL (267 aa)) is amidoligase domain. Residue serine 13 coordinates CTP. A UTP-binding site is contributed by serine 13. Residue 14 to 19 (SLGKGI) participates in ATP binding. Tyrosine 54 contacts L-glutamine. Aspartate 71 contacts ATP. Positions 71 and 141 each coordinate Mg(2+). Residues 148-150 (DIE), 188-193 (KTKPTQ), and lysine 224 contribute to the CTP site. Residues 188–193 (KTKPTQ) and lysine 224 contribute to the UTP site. 240–242 (RDA) serves as a coordination point for ATP. Residues 292 to 534 (KIALVGKYVE…VKASLTNKES (243 aa)) enclose the Glutamine amidotransferase type-1 domain. Position 354 (glycine 354) interacts with L-glutamine. The Nucleophile; for glutamine hydrolysis role is filled by cysteine 381. L-glutamine contacts are provided by residues 382 to 385 (LGMQ), glutamate 405, and arginine 462. Active-site residues include histidine 507 and glutamate 509.

This sequence belongs to the CTP synthase family. Homotetramer.

The catalysed reaction is UTP + L-glutamine + ATP + H2O = CTP + L-glutamate + ADP + phosphate + 2 H(+). The enzyme catalyses L-glutamine + H2O = L-glutamate + NH4(+). It carries out the reaction UTP + NH4(+) + ATP = CTP + ADP + phosphate + 2 H(+). Its pathway is pyrimidine metabolism; CTP biosynthesis via de novo pathway; CTP from UDP: step 2/2. Allosterically activated by GTP, when glutamine is the substrate; GTP has no effect on the reaction when ammonia is the substrate. The allosteric effector GTP functions by stabilizing the protein conformation that binds the tetrahedral intermediate(s) formed during glutamine hydrolysis. Inhibited by the product CTP, via allosteric rather than competitive inhibition. In terms of biological role, catalyzes the ATP-dependent amination of UTP to CTP with either L-glutamine or ammonia as the source of nitrogen. Regulates intracellular CTP levels through interactions with the four ribonucleotide triphosphates. The polypeptide is CTP synthase (Bacillus anthracis (strain A0248)).